Here is a 65-residue protein sequence, read N- to C-terminus: MVSVQMNENESIDKLLKRFKKKYERAGVLKEFRKKAYFVKPSIDNRLKRSRCKRRAQRANEERNS.

Belongs to the bacterial ribosomal protein bS21 family.

This Chlorobaculum parvum (strain DSM 263 / NCIMB 8327) (Chlorobium vibrioforme subsp. thiosulfatophilum) protein is Small ribosomal subunit protein bS21.